Here is a 359-residue protein sequence, read N- to C-terminus: N-acetyl-gamma-glutamyl-phosphate reductase (359 aa).

Cysteine 162 is a catalytic residue.

This sequence belongs to the NAGSA dehydrogenase family. Type 1 subfamily.

It localises to the cytoplasm. It carries out the reaction N-acetyl-L-glutamate 5-semialdehyde + phosphate + NADP(+) = N-acetyl-L-glutamyl 5-phosphate + NADPH + H(+). It functions in the pathway amino-acid biosynthesis; L-arginine biosynthesis; N(2)-acetyl-L-ornithine from L-glutamate: step 3/4. Its function is as follows. Catalyzes the NADPH-dependent reduction of N-acetyl-5-glutamyl phosphate to yield N-acetyl-L-glutamate 5-semialdehyde. This chain is N-acetyl-gamma-glutamyl-phosphate reductase, found in Prochlorococcus marinus (strain SARG / CCMP1375 / SS120).